The primary structure comprises 149 residues: 3-dehydroquinate dehydratase (149 aa).

Residue Tyr-26 is the Proton acceptor of the active site. Substrate is bound by residues Asn-78, His-84, and Asp-91. His-104 (proton donor) is an active-site residue. Substrate-binding positions include 105–106 (LS) and Arg-115.

Belongs to the type-II 3-dehydroquinase family. Homododecamer.

The enzyme catalyses 3-dehydroquinate = 3-dehydroshikimate + H2O. Its pathway is metabolic intermediate biosynthesis; chorismate biosynthesis; chorismate from D-erythrose 4-phosphate and phosphoenolpyruvate: step 3/7. In terms of biological role, catalyzes a trans-dehydration via an enolate intermediate. The sequence is that of 3-dehydroquinate dehydratase from Polynucleobacter asymbioticus (strain DSM 18221 / CIP 109841 / QLW-P1DMWA-1) (Polynucleobacter necessarius subsp. asymbioticus).